A 305-amino-acid polypeptide reads, in one-letter code: tRNA pseudouridine synthase B (305 aa).

Catalysis depends on Asp-38, which acts as the Nucleophile.

The protein belongs to the pseudouridine synthase TruB family. Type 1 subfamily.

The enzyme catalyses uridine(55) in tRNA = pseudouridine(55) in tRNA. In terms of biological role, responsible for synthesis of pseudouridine from uracil-55 in the psi GC loop of transfer RNAs. This Latilactobacillus sakei subsp. sakei (strain 23K) (Lactobacillus sakei subsp. sakei) protein is tRNA pseudouridine synthase B.